Consider the following 462-residue polypeptide: Gamma-aminobutyric acid receptor subunit alpha-5 (462 aa).

Residues 1-31 form the signal peptide; it reads MDNGMFSSFIMIKNLLLFCISMNLASHFGFS. Residues 32 to 260 are Extracellular-facing; sequence QMPTSSVKAE…FHLKRKIGYF (229 aa). Residue Asn45 is glycosylated (N-linked (GlcNAc...) asparagine). 4-aminobutanoate is bound at residue Arg101. Asn145 is a glycosylation site (N-linked (GlcNAc...) asparagine). Thr164 is a binding site for 4-aminobutanoate. A disulfide bond links Cys173 and Cys187. N-linked (GlcNAc...) asparagine glycans are attached at residues Asn207 and Asn236. The next 3 membrane-spanning stretches (helical) occupy residues 261–281, 287–308, and 319–340; these read VIQT…SFWL, PART…ISAR, and AMDW…EFAT. Over 341–427 the chain is Cytoplasmic; it reads VNYFTKRGWA…TYNSISKIDK (87 aa). Lys355 is covalently cross-linked (Glycyl lysine isopeptide (Lys-Gly) (interchain with G-Cter in ubiquitin)). Residues 375-412 form a disordered region; that stretch reads TNAYTTGKMTHPPNIPKEQTPAGTTNASSASVKPEDKA. Over residues 395-405 the composition is skewed to polar residues; it reads PAGTTNASSAS. Residues 428-448 traverse the membrane as a helical segment; the sequence is MSRIIFPLLFGTFNLVYWATY.

This sequence belongs to the ligand-gated ion channel (TC 1.A.9) family. Gamma-aminobutyric acid receptor (TC 1.A.9.5) subfamily. GABRA5 sub-subfamily. Heteropentamer, formed by a combination of alpha (GABRA1-6), beta (GABRB1-3), gamma (GABRG1-3), delta (GABRD), epsilon (GABRE), rho (GABRR1-3), pi (GABRP) and theta (GABRQ) chains, each subunit exhibiting distinct physiological and pharmacological properties.

The protein resides in the postsynaptic cell membrane. It localises to the cell membrane. It catalyses the reaction chloride(in) = chloride(out). Functionally, alpha subunit of the heteropentameric ligand-gated chloride channel gated by gamma-aminobutyric acid (GABA), a major inhibitory neurotransmitter in the brain. GABA-gated chloride channels, also named GABA(A) receptors (GABAAR), consist of five subunits arranged around a central pore and contain GABA active binding site(s) located at the alpha and beta subunit interface(s). When activated by GABA, GABAARs selectively allow the flow of chloride anions across the cell membrane down their electrochemical gradient. GABAARs containing alpha-5/GABRA5 subunits are mainly extrasynaptic and contribute to the tonic GABAergic inhibition in the hippocampus. Extrasynaptic alpha-5-containing GABAARs in CA1 pyramidal neurons play a role in learning and memory processes. The sequence is that of Gamma-aminobutyric acid receptor subunit alpha-5 (GABRA5) from Bos taurus (Bovine).